The following is a 626-amino-acid chain: PEX5-related protein (626 aa).

Disordered stretches follow at residues 1-20, 118-167, and 181-235; these read MYQG…LSSD, VSQT…SSLD, and KFHG…ASEL. Residues 181-198 are compositionally biased toward basic and acidic residues; it reads KFHGDRNTKGHPMAERKS. Serine 205 is subject to Phosphoserine. The segment covering 225–235 has biased composition (low complexity); it reads SALNSESASEL. Serine 253, serine 257, and serine 261 each carry phosphoserine. TPR repeat units lie at residues 326 to 359, 360 to 393, and 395 to 427; these read WPGA…DPGD, AEAW…QPNN, and KALM…NPKY. 2 positions are modified to phosphoserine: serine 445 and serine 447. TPR repeat units follow at residues 474–507, 509–541, and 543–575; these read PDLQ…RPED, SLWN…QPGF, and RSRY…QRKS.

The protein belongs to the peroxisomal targeting signal receptor family. As to quaternary structure, interacts with RAB8B. Forms an obligate 4:4 complex with HCN2. May interact with the C-terminal PTS1-type tripeptide peroxisomal targeting signal (SKL-type); the relevance of such interaction is however unclear. Interacts with HCN3. Interacts with HCN4 with a 4:4 HCN4:PEX5L stoichiometry; reduces the effects of cAMP on the voltage-dependence and rate of activation of HCN4. In terms of tissue distribution, mainly expressed in brain. Also expressed in pancreas, testis and pituitary.

The protein resides in the cytoplasm. The protein localises to the membrane. In terms of biological role, accessory subunit of hyperpolarization-activated cyclic nucleotide-gated (HCN) channels, regulating their cell-surface expression and cyclic nucleotide dependence. The polypeptide is PEX5-related protein (PEX5L) (Homo sapiens (Human)).